Consider the following 80-residue polypeptide: UPF0512 protein J (80 aa).

Belongs to the UPF0512 family.

The polypeptide is UPF0512 protein J (Dictyostelium discoideum (Social amoeba)).